Reading from the N-terminus, the 933-residue chain is Valine--tRNA ligase (933 aa).

Positions M1–G24 are disordered. The short motif at P57–H67 is the 'HIGH' region element. The 'KMSKS' region motif lies at K557–S561. K560 contributes to the ATP binding site. Residues L866–L932 are a coiled coil.

This sequence belongs to the class-I aminoacyl-tRNA synthetase family. ValS type 1 subfamily. Monomer.

Its subcellular location is the cytoplasm. It catalyses the reaction tRNA(Val) + L-valine + ATP = L-valyl-tRNA(Val) + AMP + diphosphate. Catalyzes the attachment of valine to tRNA(Val). As ValRS can inadvertently accommodate and process structurally similar amino acids such as threonine, to avoid such errors, it has a 'posttransfer' editing activity that hydrolyzes mischarged Thr-tRNA(Val) in a tRNA-dependent manner. The protein is Valine--tRNA ligase of Prochlorococcus marinus (strain NATL2A).